The primary structure comprises 55 residues: Large ribosomal subunit protein bL33 (55 aa).

It belongs to the bacterial ribosomal protein bL33 family.

This chain is Large ribosomal subunit protein bL33, found in Bradyrhizobium diazoefficiens (strain JCM 10833 / BCRC 13528 / IAM 13628 / NBRC 14792 / USDA 110).